Reading from the N-terminus, the 558-residue chain is Phosphatidylserine lipase ABHD16A (558 aa).

The next 2 helical transmembrane spans lie at 60 to 80 and 93 to 113; these read ILAL…FAFF and VVPF…VACL. Over 114–558 the chain is Cytoplasmic; the sequence is RGIGRWTNPQ…AQNFQMPWHL (445 aa). Positions 281 to 407 constitute an AB hydrolase-1 domain; the sequence is LVICCEGNAG…LVTRTVRQHL (127 aa). Catalysis depends on charge relay system residues Ser355, Asp430, and His507.

This sequence belongs to the AB hydrolase superfamily. ABHD16 family.

It is found in the membrane. The enzyme catalyses 1-heptadecanoyl-2-(5Z,8Z,11Z,14Z-eicosatetraenoyl)-sn-glycero-3-phosphoserine + H2O = 1-heptadecanoyl-sn-glycero-3-phosphoserine + (5Z,8Z,11Z,14Z)-eicosatetraenoate + H(+). It carries out the reaction 1-hexadecanoyl-2-(9Z-octadecenoyl)-sn-glycero-3-phospho-L-serine + H2O = 1-hexadecanoyl-sn-glycero-3-phospho-L-serine + (9Z)-octadecenoate + H(+). The catalysed reaction is 1-octadecanoyl-2-(9Z,12Z-octadecadienoyl)-sn-glycero-3-phosphoserine + H2O = 1-octadecanoyl-sn-glycero-3-phosphoserine + (9Z,12Z)-octadecadienoate + H(+). It catalyses the reaction 1-heptadecanoyl-2-(5Z,8Z,11Z,14Z-eicosatetraenoyl)-sn-glycero-3-phosphocholine + H2O = 1-heptadecanoyl-sn-glycero-3-phosphocholine + (5Z,8Z,11Z,14Z)-eicosatetraenoate + H(+). The enzyme catalyses 1-hexadecanoyl-2-(9Z-octadecenoyl)-sn-glycero-3-phosphoglycerol + H2O = 1-hexadecanoyl-sn-glycero-3-phosphoglycerol + (9Z)-octadecenoate + H(+). It carries out the reaction 1-hexadecanoyl-2-(9Z-octadecenoyl)-sn-glycero-3-phospho-(1D-myo-inositol) + H2O = 1-hexadecanoyl-sn-glycero-3-phospho-(1D-myo-inositol) + (9Z)-octadecenoate + H(+). The catalysed reaction is 1-heptadecanoyl-2-(5Z,8Z,11Z,14Z-eicosatetraenoyl)-sn-glycero-3-phosphoethanolamine + H2O = 1-heptadecanoyl-sn-glycero-3-phosphoethanolamine + (5Z,8Z,11Z,14Z)-eicosatetraenoate + H(+). It catalyses the reaction 1-hexadecanoyl-2-(9Z-octadecenoyl)-sn-glycero-3-phospho-(1'-sn-glycerol) + H2O = 1-hexadecanoyl-sn-glycero-3-phospho-(1'-sn-glycerol) + (9Z)-octadecenoate + H(+). The enzyme catalyses Hydrolyzes glycerol monoesters of long-chain fatty acids.. It carries out the reaction 1-tetradecanoylglycerol + H2O = tetradecanoate + glycerol + H(+). The catalysed reaction is 2-hexadecanoylglycerol + H2O = glycerol + hexadecanoate + H(+). It catalyses the reaction 1-(9Z-octadecenoyl)-glycerol + H2O = glycerol + (9Z)-octadecenoate + H(+). The enzyme catalyses 2-(9Z-octadecenoyl)-glycerol + H2O = glycerol + (9Z)-octadecenoate + H(+). It carries out the reaction 2-(9Z,12Z-octadecadienoyl)-glycerol + H2O = (9Z,12Z)-octadecadienoate + glycerol + H(+). The catalysed reaction is 1-(5Z,8Z,11Z,14Z-eicosatetraenoyl)-glycerol + H2O = glycerol + (5Z,8Z,11Z,14Z)-eicosatetraenoate + H(+). It catalyses the reaction 2-(5Z,8Z,11Z,14Z-eicosatetraenoyl)-glycerol + H2O = glycerol + (5Z,8Z,11Z,14Z)-eicosatetraenoate + H(+). The enzyme catalyses prostaglandin D2-1-glycerol ester + H2O = prostaglandin D2 + glycerol + H(+). It carries out the reaction 2-glyceryl-15-deoxy-Delta(12,14)-prostaglandin J2 + H2O = 15-deoxy-Delta(12,14)-prostaglandin J2 + glycerol + H(+). The catalysed reaction is 1-(9Z,12Z-octadecadienoyl)-glycerol + H2O = (9Z,12Z)-octadecadienoate + glycerol + H(+). Phosphatidylserine (PS) lipase that mediates the hydrolysis of phosphatidylserine to generate lysophosphatidylserine (LPS). LPS constitutes a class of signaling lipids that regulates immunological and neurological processes. Has no activity towards diacylglycerol, triacylglycerol or lysophosphatidylserine lipase. Also has monoacylglycerol lipase activity, with preference for 1-(9Z,12Z-octadecadienoyl)-glycerol (1-LG) and 2-glyceryl-15-deoxy-Delta(12,14)-prostaglandin J2 (15d-PGJ(2)-G). The sequence is that of Phosphatidylserine lipase ABHD16A from Bos taurus (Bovine).